Reading from the N-terminus, the 166-residue chain is Phosphopantetheine adenylyltransferase (166 aa).

Residue Ser-11 coordinates substrate. ATP is bound by residues 11–12 (SF) and His-19. 3 residues coordinate substrate: Lys-43, Val-80, and Arg-94. Residues 95 to 97 (GLR), Glu-105, and 130 to 136 (VRTITAT) contribute to the ATP site.

The protein belongs to the bacterial CoaD family. In terms of assembly, homohexamer. The cofactor is Mg(2+).

Its subcellular location is the cytoplasm. The enzyme catalyses (R)-4'-phosphopantetheine + ATP + H(+) = 3'-dephospho-CoA + diphosphate. Its pathway is cofactor biosynthesis; coenzyme A biosynthesis; CoA from (R)-pantothenate: step 4/5. In terms of biological role, reversibly transfers an adenylyl group from ATP to 4'-phosphopantetheine, yielding dephospho-CoA (dPCoA) and pyrophosphate. The sequence is that of Phosphopantetheine adenylyltransferase from Mesorhizobium japonicum (strain LMG 29417 / CECT 9101 / MAFF 303099) (Mesorhizobium loti (strain MAFF 303099)).